A 236-amino-acid polypeptide reads, in one-letter code: Class B acid phosphatase (236 aa).

The N-terminal stretch at 1-23 is a signal peptide; that stretch reads MRKLTLTLSALALALSLNSVADA. D68 acts as the Nucleophile in catalysis. 2 residues coordinate Mg(2+): D68 and D70. D70 acts as the Proton donor in catalysis. Substrate-binding positions include 136–137 and K176; that span reads TG. Mg(2+) is bound at residue D191.

The protein belongs to the class B bacterial acid phosphatase family. In terms of assembly, homotetramer. Mg(2+) is required as a cofactor.

Its subcellular location is the periplasm. It catalyses the reaction a phosphate monoester + H2O = an alcohol + phosphate. Activated by ethanol. Also activated by Co(2+), Zn(2+) and glycerol. Inhibited by EDTA, inorganic phosphate, nucleosides and Ca(2+). Unaffected by fluoride and tartrate. Functionally, dephosphorylates several organic phosphate monoesters including 5'-AMP, 3'-AMP, pNPP, PDP, 5'-UMP, 3'-UMP, G2P, glucose 6-P and ribose 5-P. No activity toward organic phosphate diesters. Also has a phosphotransferase activity catalyzing the transfer of low-energy phosphate groups from organic phosphate monoesters to free hydroxyl groups of various organic compounds. The protein is Class B acid phosphatase (aphA) of Morganella morganii (Proteus morganii).